The sequence spans 267 residues: 4-hydroxy-tetrahydrodipicolinate reductase (267 aa).

10–15 (GAGGKM) provides a ligand contact to NAD(+). Arginine 38 contributes to the NADP(+) binding site. NAD(+) contacts are provided by residues 100-102 (GTT) and 126-129 (APNF). Histidine 156 serves as the catalytic Proton donor/acceptor. Histidine 157 lines the (S)-2,3,4,5-tetrahydrodipicolinate pocket. The active-site Proton donor is the lysine 160. 166–167 (GT) is a binding site for (S)-2,3,4,5-tetrahydrodipicolinate.

It belongs to the DapB family.

Its subcellular location is the cytoplasm. It carries out the reaction (S)-2,3,4,5-tetrahydrodipicolinate + NAD(+) + H2O = (2S,4S)-4-hydroxy-2,3,4,5-tetrahydrodipicolinate + NADH + H(+). The enzyme catalyses (S)-2,3,4,5-tetrahydrodipicolinate + NADP(+) + H2O = (2S,4S)-4-hydroxy-2,3,4,5-tetrahydrodipicolinate + NADPH + H(+). It functions in the pathway amino-acid biosynthesis; L-lysine biosynthesis via DAP pathway; (S)-tetrahydrodipicolinate from L-aspartate: step 4/4. Its function is as follows. Catalyzes the conversion of 4-hydroxy-tetrahydrodipicolinate (HTPA) to tetrahydrodipicolinate. This Desulfitobacterium hafniense (strain DSM 10664 / DCB-2) protein is 4-hydroxy-tetrahydrodipicolinate reductase.